We begin with the raw amino-acid sequence, 1358 residues long: Nonribosomal peptide synthetase rstn8 (1358 aa).

A disordered region spans residues 1 to 23 (MSHSSHYSPVDSGMVPSSSSTED). Residues 261-659 (YRELDRLSSR…LGEVEYRLHQ (399 aa)) form an adenylation region. The region spanning 795–872 (ETVSPAESTL…DQASLVRPLV (78 aa)) is the Carrier domain. At Ser-832 the chain carries O-(pantetheine 4'-phosphoryl)serine. The segment at 909-1322 (EDIYPCTPLQ…DDYSQALHEL (414 aa)) is condensation.

It belongs to the NRP synthetase family. The cofactor is pantetheine 4'-phosphate.

It carries out the reaction restrictinol + glycine + H(+) = restricticin + H2O. It participates in antifungal biosynthesis. Its function is as follows. Nonribosomal peptide synthetase; part of the gene cluster that mediates the biosynthesis of the tetrahydropyranyl antifungal agent restricticin that acts as an inhibitor of CYP51 and blocks the ergosterol biosynthesis. Within the pathway, rstn8 catalyzes the C3 esterification of restrictinol with glycine to yield restricticin. Rstn8 represents an example of the emerging class of single-module NRPS-like enzymes that perform esterification reactions. Rstn8 displays strict substrate specificity toward glycine as no other natural amino acid is accepted. Rstn8 does not recognize desmethylrestrictinol as a substrate, demonstrating that rstn1-catalyzed methylation, possibly protecting the C4-OH, must precede the final esterification step. The highly reducing polyketide synthase rstn3, the short chain dehydrogenase rstn4, the cyclase rstn5, the FAD-dependent monooxygenase rstn6 and the enoylreductase rstn7 are required to generate the first stable intermediate desmethylrestrictinol. Rstn3 with rstn7 biosynthesize the first polyketide chain intermediate that is reduced by rstn4, followed by epoxidation by rstn6 before 6-endo cyclization via epoxide opening by rstn5 leads to desmethylrestrictinol. The methyltransferase rstn1 then catalyzes the C4 O-methylation of desmethylrestrictinol to produce restrictinol, and the nonribosomal peptide synthetase rstn8 catalyzes the C3 esterification of restrictinol with glycine that leads to restricticin. This is Nonribosomal peptide synthetase rstn8 from Aspergillus nomiae NRRL (strain ATCC 15546 / NRRL 13137 / CBS 260.88 / M93).